Here is a 269-residue protein sequence, read N- to C-terminus: tRNA pseudouridine synthase A (269 aa).

The active-site Nucleophile is the D55. Y111 lines the substrate pocket.

It belongs to the tRNA pseudouridine synthase TruA family.

It carries out the reaction uridine(38/39/40) in tRNA = pseudouridine(38/39/40) in tRNA. Functionally, formation of pseudouridine at positions 38, 39 and 40 in the anticodon stem and loop of transfer RNAs. This Methanosarcina mazei (strain ATCC BAA-159 / DSM 3647 / Goe1 / Go1 / JCM 11833 / OCM 88) (Methanosarcina frisia) protein is tRNA pseudouridine synthase A.